The primary structure comprises 346 residues: MNLQEKIEDLRKRTLSDLLSVADEKTLNNLRTVMLGKKGELTEILKGMKDLTNEERPVIGALANAFRDEFGAKFEAKKVEIEQAVMNAALESETLDVTLPGKAQKKGSRHILTQTQEEIEEIFLGMGYEIVDGYEVETDHYNFERMNLPKDHPARDMQDTFYITNEVLLRTHTSPMQARTMDAHDFSKGGLRMIAPGRVYRRDTDDATHSHQFHQIEGLVVDKNITMADLKGTLDLVMKKMFGQDRELRWRPSYFPFTEPSVEVDISCFKCGGKGCNVCKHTGWIEILGAGMVHPNVLEMSGLDSSVYSGFAFGLGQERIAMLRYGINDIRGFYQGDVRFLEQFGK.

Residue glutamate 259 participates in Mg(2+) binding.

It belongs to the class-II aminoacyl-tRNA synthetase family. Phe-tRNA synthetase alpha subunit type 1 subfamily. As to quaternary structure, tetramer of two alpha and two beta subunits. Requires Mg(2+) as cofactor.

It localises to the cytoplasm. It carries out the reaction tRNA(Phe) + L-phenylalanine + ATP = L-phenylalanyl-tRNA(Phe) + AMP + diphosphate + H(+). The protein is Phenylalanine--tRNA ligase alpha subunit of Lactococcus lactis subsp. lactis (strain IL1403) (Streptococcus lactis).